A 294-amino-acid polypeptide reads, in one-letter code: Cytidine deaminase (294 aa).

CMP/dCMP-type deaminase domains follow at residues 48-168 (DDDA…FGPT) and 187-294 (AETD…RVTF). Residue 89–91 (NME) coordinates substrate. Histidine 102 is a binding site for Zn(2+). Residue glutamate 104 is the Proton donor of the active site. Zn(2+) is bound by residues cysteine 129 and cysteine 132.

It belongs to the cytidine and deoxycytidylate deaminase family. As to quaternary structure, homodimer. Zn(2+) is required as a cofactor.

It carries out the reaction cytidine + H2O + H(+) = uridine + NH4(+). The catalysed reaction is 2'-deoxycytidine + H2O + H(+) = 2'-deoxyuridine + NH4(+). Its function is as follows. This enzyme scavenges exogenous and endogenous cytidine and 2'-deoxycytidine for UMP synthesis. This chain is Cytidine deaminase, found in Yersinia pseudotuberculosis serotype IB (strain PB1/+).